Consider the following 105-residue polypeptide: Large ribosomal subunit protein bL21 (105 aa).

It belongs to the bacterial ribosomal protein bL21 family. As to quaternary structure, part of the 50S ribosomal subunit. Contacts protein L20.

Its function is as follows. This protein binds to 23S rRNA in the presence of protein L20. This chain is Large ribosomal subunit protein bL21, found in Methylobacterium sp. (strain 4-46).